The chain runs to 470 residues: Cell division protein FtsP (470 aa).

The tat-type signal signal peptide spans 1–27 (MSFSRRQFLQASGIALCAGAIPLRANA). Residues 222 to 287 (VEVSRGWVRL…RREILVDMTN (66 aa)) form the Plastocyanin-like domain.

Belongs to the FtsP family. Post-translationally, predicted to be exported by the Tat system. The position of the signal peptide cleavage has not been experimentally proven.

Its subcellular location is the periplasm. Functionally, cell division protein that is required for growth during stress conditions. May be involved in protecting or stabilizing the divisomal assembly under conditions of stress. The chain is Cell division protein FtsP from Salmonella typhi.